The primary structure comprises 472 residues: Uronate isomerase (472 aa).

It belongs to the metallo-dependent hydrolases superfamily. Uronate isomerase family.

It carries out the reaction D-glucuronate = D-fructuronate. The catalysed reaction is aldehydo-D-galacturonate = keto-D-tagaturonate. The protein operates within carbohydrate metabolism; pentose and glucuronate interconversion. This Xanthomonas axonopodis pv. citri (strain 306) protein is Uronate isomerase.